The sequence spans 555 residues: Chaperonin GroEL (555 aa).

ATP contacts are provided by residues 29 to 32 (TLGP), K50, 86 to 90 (DGTTT), G418, and D499. The tract at residues 528–555 (HEEDNNTGNRSGGGVGGGHHGGMGGMDF) is disordered. Positions 537–555 (RSGGGVGGGHHGGMGGMDF) are enriched in gly residues.

It belongs to the chaperonin (HSP60) family. As to quaternary structure, forms a cylinder of 14 subunits composed of two heptameric rings stacked back-to-back. Interacts with the co-chaperonin GroES.

The protein resides in the cytoplasm. It carries out the reaction ATP + H2O + a folded polypeptide = ADP + phosphate + an unfolded polypeptide.. In terms of biological role, together with its co-chaperonin GroES, plays an essential role in assisting protein folding. The GroEL-GroES system forms a nano-cage that allows encapsulation of the non-native substrate proteins and provides a physical environment optimized to promote and accelerate protein folding. The chain is Chaperonin GroEL from Orientia tsutsugamushi (Rickettsia tsutsugamushi).